Here is a 619-residue protein sequence, read N- to C-terminus: MSNTDPQPPQKLPLNWVVWTLAVALMLYYLPAMRDRPEPAIKLPYSEFRMLLREGQISSVTLRGSELDGKFITPRMFPEQRRQYSRFLTQLPDFGNEAILAELEEQNIPLEVKEGHDASSSKVILLSYLPWIMFMIILFWLSRRTFRNFSGRGGAFDFDKRLETQFECQKPDTTFDEVAGQTNAKREVQELVEYLRDPDRFHRVGALAPRGVLLMGPPGTGKTLLARALAGEAGVNFYPMSASEFIEVFVGVGASRVRQLFKIAKENSPSIIFIDELDSVGRTRGAGYGGGHDEREQTLNQILAEMDGFAGHDAVIVLAATNRPDVLDPALMRPGRFDRHVTLDLPDQEGRVAILKVHARHIPLADDVNLNQVAAGTPGFSGADLKNLINEAAIQAARENRDHVHSLDFDIARDKIIMGAERTLIIPPDEKHRLAVHESGHTLVAYYLPNTDPLYKVSIVPHGRSLGGTHQLPLQERHTYPEEYLRDKLAVMLAGRIAERELLGSVSTGADDDIHQATGLARAMVSRWGMSKEVGPVDLRDSEEHPFLGREMAQPHHHSEFSAEIIDKAVRELLVAAETTAADLISTHREKLDRLVALLERSETLHKAQIDECLQTGAS.

Over 1 to 11 (MSNTDPQPPQK) the chain is Cytoplasmic. Residues 12 to 32 (LPLNWVVWTLAVALMLYYLPA) form a helical membrane-spanning segment. Residues 33 to 120 (MRDRPEPAIK…EVKEGHDASS (88 aa)) lie on the Periplasmic side of the membrane. A helical membrane pass occupies residues 121–141 (SKVILLSYLPWIMFMIILFWL). Over 142-619 (SRRTFRNFSG…IDECLQTGAS (478 aa)) the chain is Cytoplasmic. Residue 216-223 (GPPGTGKT) coordinates ATP. Histidine 437 is a Zn(2+) binding site. Glutamate 438 is an active-site residue. Residues histidine 441 and aspartate 513 each contribute to the Zn(2+) site.

It in the central section; belongs to the AAA ATPase family. In the C-terminal section; belongs to the peptidase M41 family. In terms of assembly, homohexamer. Zn(2+) is required as a cofactor.

The protein localises to the cell inner membrane. In terms of biological role, acts as a processive, ATP-dependent zinc metallopeptidase for both cytoplasmic and membrane proteins. Plays a role in the quality control of integral membrane proteins. The sequence is that of ATP-dependent zinc metalloprotease FtsH from Hahella chejuensis (strain KCTC 2396).